The following is a 367-amino-acid chain: 2-aminoethylphosphonate--pyruvate transaminase (367 aa).

An N6-(pyridoxal phosphate)lysine modification is found at K194.

This sequence belongs to the class-V pyridoxal-phosphate-dependent aminotransferase family. PhnW subfamily. As to quaternary structure, homodimer. Requires pyridoxal 5'-phosphate as cofactor.

It carries out the reaction (2-aminoethyl)phosphonate + pyruvate = phosphonoacetaldehyde + L-alanine. Involved in phosphonate degradation. The protein is 2-aminoethylphosphonate--pyruvate transaminase of Salmonella agona (strain SL483).